A 498-amino-acid polypeptide reads, in one-letter code: Guanosine-5'-triphosphate,3'-diphosphate pyrophosphatase (498 aa).

It belongs to the GppA/Ppx family. GppA subfamily.

It carries out the reaction guanosine 3'-diphosphate 5'-triphosphate + H2O = guanosine 3',5'-bis(diphosphate) + phosphate + H(+). It participates in purine metabolism; ppGpp biosynthesis; ppGpp from GTP: step 2/2. In terms of biological role, catalyzes the conversion of pppGpp to ppGpp. Guanosine pentaphosphate (pppGpp) is a cytoplasmic signaling molecule which together with ppGpp controls the 'stringent response', an adaptive process that allows bacteria to respond to amino acid starvation, resulting in the coordinated regulation of numerous cellular activities. This is Guanosine-5'-triphosphate,3'-diphosphate pyrophosphatase from Pectobacterium carotovorum subsp. carotovorum (strain PC1).